Consider the following 189-residue polypeptide: MANLRTQKRLAASVVGVGKRKVWLDPNETSEIAQANSRNAIRKLVKNGTIVKKAVTVHSKSRTRAHAQSKREGRHSGYGKRKGTREARLPSQVVWIRRLRVLRRLLAKYRDAGKIDKHLYHVLYKESKGNAFKHKRALVEHIIQAKADAQREKALNEEAEARRLKNRAARDRRAQRVAEKRDALLKEDA.

K21 is covalently cross-linked (Glycyl lysine isopeptide (Lys-Gly) (interchain with G-Cter in ubiquitin)). Phosphoserine occurs at positions 30 and 37. Glycyl lysine isopeptide (Lys-Gly) (interchain with G-Cter in ubiquitin) cross-links involve residues K53 and K60. A disordered region spans residues 58–85; that stretch reads HSKSRTRAHAQSKREGRHSGYGKRKGTR. The segment covering 59-68 has biased composition (basic residues); that stretch reads SKSRTRAHAQ. S91 bears the Phosphoserine mark. Residues K146 and K186 each participate in a glycyl lysine isopeptide (Lys-Gly) (interchain with G-Cter in ubiquitin) cross-link. Residues 164-189 form a disordered region; that stretch reads LKNRAARDRRAQRVAEKRDALLKEDA.

Belongs to the eukaryotic ribosomal protein eL19 family. Component of the large ribosomal subunit (LSU). Mature yeast ribosomes consist of a small (40S) and a large (60S) subunit. The 40S small subunit contains 1 molecule of ribosomal RNA (18S rRNA) and 33 different proteins (encoded by 57 genes). The large 60S subunit contains 3 rRNA molecules (25S, 5.8S and 5S rRNA) and 46 different proteins (encoded by 81 genes). eL19 lies in close proximity to the binding site for eukaryotic initiation factor eIF4G.

The protein localises to the cytoplasm. Its function is as follows. Component of the ribosome, a large ribonucleoprotein complex responsible for the synthesis of proteins in the cell. The small ribosomal subunit (SSU) binds messenger RNAs (mRNAs) and translates the encoded message by selecting cognate aminoacyl-transfer RNA (tRNA) molecules. The large subunit (LSU) contains the ribosomal catalytic site termed the peptidyl transferase center (PTC), which catalyzes the formation of peptide bonds, thereby polymerizing the amino acids delivered by tRNAs into a polypeptide chain. The nascent polypeptides leave the ribosome through a tunnel in the LSU and interact with protein factors that function in enzymatic processing, targeting, and the membrane insertion of nascent chains at the exit of the ribosomal tunnel. eL19 may play a role in the last stages of translation initiation, in particular subunit joining and shedding/releasing factors. The protein is Large ribosomal subunit protein eL19A of Saccharomyces cerevisiae (strain ATCC 204508 / S288c) (Baker's yeast).